The sequence spans 288 residues: Protein FANTASTIC FOUR 3 (288 aa).

Positions 48-60 (HAEDTRNRNDDKA) are enriched in basic and acidic residues. Disordered stretches follow at residues 48–100 (HAED…YYVQ), 146–172 (ETTT…PLTT), and 222–261 (NEFV…IENV). A compositionally biased stretch (low complexity) spans 66–90 (SDSSGWSSLQSLSSGSSSSTKTTTS). An FAF domain is found at 165–217 (DLPPPLTTMRGFQCIQMRPHRENGRLVMTATNAPPRNGCFQADRSNGRLRLSI). A compositionally biased stretch (acidic residues) spans 223-256 (EFVENEEETIEPEETEEYEEEEEEEEDEDEDEVM).

This sequence belongs to the fantastic four family. In terms of tissue distribution, expressed in the shoot apex, stamens, young leaves and young siliques, but not in old leaves. Detected in provascular and vascular tissue, but not in the vegetative meristem. In inflorescences, restricted to the vasculature and absent from young flowers, except from anthers.

In terms of biological role, able to repress WUS when constitutively overexpressed, but have no effect on CLV3. The chain is Protein FANTASTIC FOUR 3 (FAF3) from Arabidopsis thaliana (Mouse-ear cress).